Consider the following 500-residue polypeptide: ATP synthase subunit alpha (500 aa).

ATP is bound at residue 169–176 (GDRQTGKT).

The protein belongs to the ATPase alpha/beta chains family. As to quaternary structure, F-type ATPases have 2 components, CF(1) - the catalytic core - and CF(0) - the membrane proton channel. CF(1) has five subunits: alpha(3), beta(3), gamma(1), delta(1), epsilon(1). CF(0) has three main subunits: a(1), b(2) and c(9-12). The alpha and beta chains form an alternating ring which encloses part of the gamma chain. CF(1) is attached to CF(0) by a central stalk formed by the gamma and epsilon chains, while a peripheral stalk is formed by the delta and b chains.

The protein localises to the cell membrane. The enzyme catalyses ATP + H2O + 4 H(+)(in) = ADP + phosphate + 5 H(+)(out). In terms of biological role, produces ATP from ADP in the presence of a proton gradient across the membrane. The alpha chain is a regulatory subunit. This chain is ATP synthase subunit alpha, found in Lactococcus lactis subsp. cremoris (strain SK11).